The chain runs to 241 residues: Translation initiation factor IF-3 (241 aa).

The tract at residues 178–241 (KKTEAMAEAR…EAPAEASTEA (64 aa)) is disordered. The span at 180 to 197 (TEAMAEAREAQAARKAEA) shows a compositional bias: basic and acidic residues. Residues 208–229 (ADEDIPEGELPEGEVPEAETTE) show a composition bias toward acidic residues. The segment covering 230–241 (AAEAPAEASTEA) has biased composition (low complexity).

The protein belongs to the IF-3 family. Monomer.

Its subcellular location is the cytoplasm. IF-3 binds to the 30S ribosomal subunit and shifts the equilibrium between 70S ribosomes and their 50S and 30S subunits in favor of the free subunits, thus enhancing the availability of 30S subunits on which protein synthesis initiation begins. The chain is Translation initiation factor IF-3 from Streptomyces avermitilis (strain ATCC 31267 / DSM 46492 / JCM 5070 / NBRC 14893 / NCIMB 12804 / NRRL 8165 / MA-4680).